Here is a 2139-residue protein sequence, read N- to C-terminus: U5 small nuclear ribonucleoprotein 200 kDa helicase (2139 aa).

A phosphoserine mark is found at Ser17 and Ser26. The tract at residues 39-80 is disordered; that stretch reads EVLSLVGKLEGTRMGDKAQRTKPQMQEERRAKRRKRDEDRHD. Lys46 is covalently cross-linked (Glycyl lysine isopeptide (Lys-Gly) (interchain with G-Cter in SUMO2)). The segment covering 48 to 80 has biased composition (basic and acidic residues); it reads EGTRMGDKAQRTKPQMQEERRAKRRKRDEDRHD. Positions 54–84 form a coiled coil; it reads DKAQRTKPQMQEERRAKRRKRDEDRHDINKM. At Ser225 the chain carries Phosphoserine. At Thr389 the chain carries Phosphothreonine. An interaction with C9orf78 and WBP4 region spans residues 395 to 2132; it reads DLDQGGEALA…YKFSVDVKEA (1738 aa). The Helicase ATP-binding 1 domain maps to 490 to 673; the sequence is RAALETDENL…FLRVDPAKGL (184 aa). 503–510 provides a ligand contact to ATP; that stretch reads APTGAGKT. A DEAH box motif is present at residues 615–618; that stretch reads DEIH. Residues 684–921 enclose the Helicase C-terminal 1 domain; sequence PLEQTYVGIT…NAKDAVNWLG (238 aa). Tyr709 carries the post-translational modification Phosphotyrosine. Lys944 participates in a covalent cross-link: Glycyl lysine isopeptide (Lys-Gly) (interchain with G-Cter in SUMO). The residue at position 971 (Lys971) is an N6-acetyllysine; alternate. A Glycyl lysine isopeptide (Lys-Gly) (interchain with G-Cter in SUMO); alternate cross-link involves residue Lys971. The SEC63 1 domain occupies 982–1289; that stretch reads TELGRIASHY…SCETQLPVSF (308 aa). Residues Lys1071 and Lys1199 each participate in a glycyl lysine isopeptide (Lys-Gly) (interchain with G-Cter in SUMO) cross-link. The interval 1285-2139 is interaction with TSSC4; that stretch reads LPVSFRHLIL…KEAETDSDSD (855 aa). The region spanning 1340–1515 is the Helicase ATP-binding 2 domain; it reads NTVYNSDDNV…WLGCSATSTF (176 aa). Residue 1353–1360 participates in ATP binding; it reads APTGSGKT. Thr1431 is subject to Phosphothreonine. A DEAH box motif is present at residues 1457–1460; the sequence is DEVH. The Helicase C-terminal 2 domain maps to 1548-1756; sequence PVYHAITKHS…TIENKQDAVD (209 aa). Thr1768 is modified (phosphothreonine). One can recognise an SEC63 2 domain in the interval 1815-2127; the sequence is PLNLGMIAAY…GCDQEYKFSV (313 aa). Ser2005 is modified (phosphoserine). A Glycyl lysine isopeptide (Lys-Gly) (interchain with G-Cter in SUMO) cross-link involves residue Lys2094. Position 2134 is a phosphothreonine (Thr2134). A phosphoserine mark is found at Ser2136 and Ser2138.

Belongs to the helicase family. SKI2 subfamily. Component of a core complex containing at least PRPF8, SNRNP200, EFTUD2 and SNRNP40. Component of the U5 snRNP and U4/U6-U5 tri-snRNP complexes, building blocks of the spliceosome. Component of the U4/U6-U5 tri-snRNP complex composed of the U4, U6 and U5 snRNAs and at least PRPF3, PRPF4, PRPF6, PRPF8, PRPF31, SNRNP200, TXNL4A, SNRNP40, DDX23, CD2BP2, PPIH, SNU13, EFTUD2, SART1 and USP39. Component of precatalytic, catalytic and postcatalytic spliceosomal complexes. Component of the minor spliceosome, which splices U12-type introns. Interacts with C9orf78; the interaction is direct and mutually exclusive with its interaction with WBP4. Interacts with WBP4; the interaction is mutually exclusive with its interaction with C9orf78. Interacts with PRPF8. Interacts with TSSC4; the interaction is direct, excludes recruitment of C9ORF78 and WBP4 to SNRNP200 and negatively regulates its RNA helicase activity.

The protein localises to the nucleus. It carries out the reaction ATP + H2O = ADP + phosphate + H(+). Catalyzes the ATP-dependent unwinding of U4/U6 RNA duplices, an essential step in the assembly of a catalytically active spliceosome. Plays a role in pre-mRNA splicing as core component of precatalytic, catalytic and postcatalytic spliceosomal complexes. As a component of the minor spliceosome, involved in the splicing of U12-type introns in pre-mRNAs. Involved in spliceosome assembly, activation and disassembly. Mediates changes in the dynamic network of RNA-RNA interactions in the spliceosome. The polypeptide is U5 small nuclear ribonucleoprotein 200 kDa helicase (Snrnp200) (Rattus norvegicus (Rat)).